The primary structure comprises 310 residues: Cytochrome f (310 aa).

The first 23 residues, 1 to 23 (MRRLIPILLGSLVLSLSILVAPA), serve as a signal peptide directing secretion. Positions 28, 48, 51, and 52 each coordinate heme. The chain crosses the membrane as a helical span at residues 277 to 297 (IYGLLAFFVAVSLAQILLVLK).

Belongs to the cytochrome f family. The 4 large subunits of the cytochrome b6-f complex are cytochrome b6, subunit IV (17 kDa polypeptide, PetD), cytochrome f and the Rieske protein, while the 4 small subunits are PetG, PetL, PetM and PetN. The complex functions as a dimer. The cofactor is heme.

The protein localises to the cellular thylakoid membrane. Functionally, component of the cytochrome b6-f complex, which mediates electron transfer between photosystem II (PSII) and photosystem I (PSI), cyclic electron flow around PSI, and state transitions. The sequence is that of Cytochrome f from Prochlorococcus marinus (strain MIT 9303).